Consider the following 548-residue polypeptide: Multidrug efflux system permease protein Rv1217c (548 aa).

Helical transmembrane passes span 39–59 (VSLPLWVLLLSVPLATVYIAS), 99–119 (GIWKAGMFHTLIAVAVILTVI), 148–168 (ALLLSFGASIATGAIGALGLL), 178–198 (VAFGVALAASGMVFTAVAAVA), 210–230 (AVAFAVLGTAFALRAIGDAGS), 253–273 (WWVLLLSLATAAVLTVLAYRL), 313–333 (LLWTVGLCLYGLVMGSVVHGI), 359–379 (AFLALAFTMIGMVAAAFAVSL), 410–430 (LAMALAGSAVATLISGVAAGL), 450–470 (AAVQLPAVWLLSAVTVGLFGL), 477–497 (VAWGVLVGFIALYLLGSLAGF), and 521–541 (VPLLWLLAIDAALITLGAMAF).

In terms of assembly, the complex is probably composed of two ATP-binding proteins (Rv1218c) and a transmembrane protein (Rv1217c).

It localises to the cell inner membrane. Functionally, probably part of the ABC transporter complex Rv1217c-Rv1218c involved in the resistance to a wide range of structurally unrelated drugs. Probably responsible for the translocation of the substrate across the membrane. In Mycobacterium tuberculosis (strain ATCC 25618 / H37Rv), this protein is Multidrug efflux system permease protein Rv1217c.